A 148-amino-acid polypeptide reads, in one-letter code: MNVSRLEELISMNPFSDMENIVINEKEKCILGNRCFVKLSEVYNMPMCCIDTNQCLTMNRFKFSLNELLYTPFYYKQLQYQYLTPQFIFRCIQEANENNMSCYYCYTKKKEHNGLNIDIFIPTANSKSYIVIGLRIKDFWKQSFKVNK.

Belongs to the poxviridae F15 protein family.

The polypeptide is Protein F15 (Fowlpox virus (strain NVSL) (FPV)).